Consider the following 383-residue polypeptide: Homoserine O-acetyltransferase (383 aa).

Positions 52–362 (NAILVCHALT…PWGHDAFLLD (311 aa)) constitute an AB hydrolase-1 domain. The Nucleophile role is filled by Ser158. Residue Arg227 participates in substrate binding. Active-site residues include Asp323 and His356. Residue Asp357 participates in substrate binding.

It belongs to the AB hydrolase superfamily. MetX family. As to quaternary structure, homodimer.

The protein resides in the cytoplasm. The catalysed reaction is L-homoserine + acetyl-CoA = O-acetyl-L-homoserine + CoA. It participates in amino-acid biosynthesis; L-methionine biosynthesis via de novo pathway; O-acetyl-L-homoserine from L-homoserine: step 1/1. Transfers an acetyl group from acetyl-CoA to L-homoserine, forming acetyl-L-homoserine. The polypeptide is Homoserine O-acetyltransferase (Symbiobacterium thermophilum (strain DSM 24528 / JCM 14929 / IAM 14863 / T)).